Consider the following 475-residue polypeptide: Glutamate--tRNA ligase (475 aa).

Positions 11–21 (PSPTGFLHIGG) match the 'HIGH' region motif. The short motif at 240–244 (KLSKR) is the 'KMSKS' region element. Residue K243 participates in ATP binding.

This sequence belongs to the class-I aminoacyl-tRNA synthetase family. Glutamate--tRNA ligase type 1 subfamily. In terms of assembly, monomer.

The protein localises to the cytoplasm. The catalysed reaction is tRNA(Glu) + L-glutamate + ATP = L-glutamyl-tRNA(Glu) + AMP + diphosphate. Catalyzes the attachment of glutamate to tRNA(Glu) in a two-step reaction: glutamate is first activated by ATP to form Glu-AMP and then transferred to the acceptor end of tRNA(Glu). The protein is Glutamate--tRNA ligase of Bradyrhizobium diazoefficiens (strain JCM 10833 / BCRC 13528 / IAM 13628 / NBRC 14792 / USDA 110).